The sequence spans 402 residues: S-adenosylmethionine synthase (402 aa).

H16 serves as a coordination point for ATP. Position 18 (D18) interacts with Mg(2+). K(+) is bound at residue E44. The L-methionine site is built by E57 and Q103. The interval Q103–T113 is flexible loop. ATP-binding positions include D178 to K180, K249 to F250, D258, R264 to K265, A281, and K285. L-methionine is bound at residue D258. K289 is an L-methionine binding site.

It belongs to the AdoMet synthase family. In terms of assembly, homotetramer; dimer of dimers. Mg(2+) is required as a cofactor. K(+) serves as cofactor.

The protein localises to the cytoplasm. The enzyme catalyses L-methionine + ATP + H2O = S-adenosyl-L-methionine + phosphate + diphosphate. It functions in the pathway amino-acid biosynthesis; S-adenosyl-L-methionine biosynthesis; S-adenosyl-L-methionine from L-methionine: step 1/1. Its function is as follows. Catalyzes the formation of S-adenosylmethionine (AdoMet) from methionine and ATP. The overall synthetic reaction is composed of two sequential steps, AdoMet formation and the subsequent tripolyphosphate hydrolysis which occurs prior to release of AdoMet from the enzyme. The polypeptide is S-adenosylmethionine synthase (Mycolicibacterium gilvum (strain PYR-GCK) (Mycobacterium gilvum (strain PYR-GCK))).